Here is a 438-residue protein sequence, read N- to C-terminus: Aspartate--tRNA(Asp/Asn) ligase (438 aa).

E176 serves as a coordination point for L-aspartate. The segment at 198–201 is aspartate; the sequence is QLYK. L-aspartate is bound at residue R220. Residues 220 to 222, 228 to 230, and E361 each bind ATP; these read RAE and RHL. E361 and S364 together coordinate Mg(2+). L-aspartate is bound by residues S364 and R368. ATP is bound at residue 409–412; the sequence is GADR.

It belongs to the class-II aminoacyl-tRNA synthetase family. Type 2 subfamily. Homodimer. Requires Mg(2+) as cofactor.

It localises to the cytoplasm. The catalysed reaction is tRNA(Asx) + L-aspartate + ATP = L-aspartyl-tRNA(Asx) + AMP + diphosphate. Functionally, aspartyl-tRNA synthetase with relaxed tRNA specificity since it is able to aspartylate not only its cognate tRNA(Asp) but also tRNA(Asn). Reaction proceeds in two steps: L-aspartate is first activated by ATP to form Asp-AMP and then transferred to the acceptor end of tRNA(Asp/Asn). The polypeptide is Aspartate--tRNA(Asp/Asn) ligase (Methanococcus maripaludis (strain DSM 14266 / JCM 13030 / NBRC 101832 / S2 / LL)).